Reading from the N-terminus, the 382-residue chain is Glutamate 5-kinase (382 aa).

Lys-15 is an ATP binding site. Residues Ser-62, Asp-149, and Asn-161 each coordinate substrate. 181-182 (TD) is a binding site for ATP. One can recognise a PUA domain in the interval 288-366 (RGSVSVDAGA…VEIERLLGYS (79 aa)).

It belongs to the glutamate 5-kinase family.

The protein localises to the cytoplasm. It catalyses the reaction L-glutamate + ATP = L-glutamyl 5-phosphate + ADP. It participates in amino-acid biosynthesis; L-proline biosynthesis; L-glutamate 5-semialdehyde from L-glutamate: step 1/2. Its function is as follows. Catalyzes the transfer of a phosphate group to glutamate to form L-glutamate 5-phosphate. This is Glutamate 5-kinase from Delftia acidovorans (strain DSM 14801 / SPH-1).